The primary structure comprises 95 residues: ESAT-6-like protein EsxC (95 aa).

This sequence belongs to the WXG100 family. ESAT-6 subfamily.

Its subcellular location is the secreted. In Mycobacterium tuberculosis (strain CDC 1551 / Oshkosh), this protein is ESAT-6-like protein EsxC.